A 410-amino-acid chain; its full sequence is 2-hydroxy-5-methyl-1-naphthoate 7-hydroxylase (410 aa).

Residue Cys-350 coordinates heme.

The protein belongs to the cytochrome P450 family. The cofactor is heme.

It catalyses the reaction 2-hydroxy-5-methyl-1-naphthoate + 2 reduced [2Fe-2S]-[ferredoxin] + O2 + 2 H(+) = 2,7-dihydroxy-5-methyl-1-naphthoate + 2 oxidized [2Fe-2S]-[ferredoxin] + H2O. It functions in the pathway antibiotic biosynthesis. Its function is as follows. Involved in the biosynthesis of the naphthoic acid (NA) moiety in the chromophore of the enedyine antitumor antibiotic neocarzinostatin (NCS). Catalyzes the hydroxylation at C-7 position of 2-hydroxy-5-methyl-1-naphthoate to yield 2,7-dihydroxy-5-methyl-1-naphthoate. This Streptomyces carzinostaticus protein is 2-hydroxy-5-methyl-1-naphthoate 7-hydroxylase.